We begin with the raw amino-acid sequence, 297 residues long: Ribosomal RNA small subunit methyltransferase H (297 aa).

Residues 37–39 (GGH), Glu-56, Phe-87, Asp-102, and His-109 contribute to the S-adenosyl-L-methionine site.

Belongs to the methyltransferase superfamily. RsmH family.

The protein localises to the cytoplasm. It catalyses the reaction cytidine(1402) in 16S rRNA + S-adenosyl-L-methionine = N(4)-methylcytidine(1402) in 16S rRNA + S-adenosyl-L-homocysteine + H(+). Specifically methylates the N4 position of cytidine in position 1402 (C1402) of 16S rRNA. In Borrelia hermsii (strain HS1 / DAH), this protein is Ribosomal RNA small subunit methyltransferase H.